A 254-amino-acid polypeptide reads, in one-letter code: Putative hydro-lyase SACE_1553 (254 aa).

It belongs to the D-glutamate cyclase family.

The protein is Putative hydro-lyase SACE_1553 of Saccharopolyspora erythraea (strain ATCC 11635 / DSM 40517 / JCM 4748 / NBRC 13426 / NCIMB 8594 / NRRL 2338).